Reading from the N-terminus, the 299-residue chain is HTH-type transcriptional regulator ArgP (299 aa).

Residues 2–58 (FDYKLLSALAAVIEQAGFERAAQVLGLSQSAISQRIKLLEARVGQPVLVRVTPPAPT) enclose the HTH lysR-type domain. A DNA-binding region (H-T-H motif) is located at residues 19-38 (FERAAQVLGLSQSAISQRIK).

The protein belongs to the LysR transcriptional regulatory family. In terms of assembly, homodimer.

Its function is as follows. Controls the transcription of genes involved in arginine and lysine metabolism. The protein is HTH-type transcriptional regulator ArgP of Pseudomonas fluorescens (strain ATCC BAA-477 / NRRL B-23932 / Pf-5).